A 140-amino-acid polypeptide reads, in one-letter code: General stress protein 26 (140 aa).

The sequence is that of General stress protein 26 (ydaG) from Bacillus subtilis (strain 168).